The sequence spans 230 residues: 6-carboxyhexanoate--CoA ligase (230 aa).

This sequence belongs to the BioW family. Homodimer. Mg(2+) is required as a cofactor.

It carries out the reaction heptanedioate + ATP + CoA = 6-carboxyhexanoyl-CoA + AMP + diphosphate. It participates in metabolic intermediate metabolism; pimeloyl-CoA biosynthesis; pimeloyl-CoA from pimelate: step 1/1. Its function is as follows. Catalyzes the transformation of pimelate into pimeloyl-CoA with concomitant hydrolysis of ATP to AMP. This chain is 6-carboxyhexanoate--CoA ligase, found in Staphylococcus aureus (strain MSSA476).